The following is a 181-amino-acid chain: Ribonuclease HII (181 aa).

Positions 1–181 constitute an RNase H type-2 domain; the sequence is MICGIDEVGR…SLHRKSFRLI (181 aa). D6, E7, and D98 together coordinate a divalent metal cation.

Belongs to the RNase HII family. Mn(2+) is required as a cofactor. Mg(2+) serves as cofactor.

The protein resides in the cytoplasm. It catalyses the reaction Endonucleolytic cleavage to 5'-phosphomonoester.. Endonuclease that specifically degrades the RNA of RNA-DNA hybrids. In Borrelia recurrentis (strain A1), this protein is Ribonuclease HII.